The sequence spans 311 residues: Ribosomal protein L11 methyltransferase (311 aa).

S-adenosyl-L-methionine is bound by residues Thr162, Gly183, Asp205, and Asn248.

This sequence belongs to the methyltransferase superfamily. PrmA family.

The protein localises to the cytoplasm. It catalyses the reaction L-lysyl-[protein] + 3 S-adenosyl-L-methionine = N(6),N(6),N(6)-trimethyl-L-lysyl-[protein] + 3 S-adenosyl-L-homocysteine + 3 H(+). Its function is as follows. Methylates ribosomal protein L11. The chain is Ribosomal protein L11 methyltransferase from Bacillus velezensis (strain DSM 23117 / BGSC 10A6 / LMG 26770 / FZB42) (Bacillus amyloliquefaciens subsp. plantarum).